A 257-amino-acid polypeptide reads, in one-letter code: MADS-box transcription factor 1 (257 aa).

In terms of domain architecture, MADS-box spans 1-61; the sequence is MGRGKVELKR…GRLFEFSSSS (61 aa). One can recognise a K-box domain in the interval 85–175; it reads NEINYQEYLK…RKKLQETSAE (91 aa).

In terms of assembly, may interact with the K-box of MADS6, MADS14 and MADS15.

The protein resides in the nucleus. In terms of biological role, probable transcription factor involved in the development of floral organs. Required for the formation of inner floral organs (lodicules, stamens and carpels, or whorls 2, 3 and 4) and the lemma and palea (whorl 1), which are grass floral organs analogous to sepals. May be involved in the control of flowering time. Seems to act as transcriptional activator. May act upstream of the auxin-responsive protein GH3.8. This is MADS-box transcription factor 1 (MADS1) from Oryza sativa subsp. indica (Rice).